A 736-amino-acid polypeptide reads, in one-letter code: Elongation factor 2 (736 aa).

One can recognise a tr-type G domain in the interval Thr18–Val262. GTP is bound by residues Ala27–Thr34, Asp93–His97, and Asn147–Asp150. His603 carries the post-translational modification Diphthamide.

It belongs to the TRAFAC class translation factor GTPase superfamily. Classic translation factor GTPase family. EF-G/EF-2 subfamily.

The protein localises to the cytoplasm. Functionally, catalyzes the GTP-dependent ribosomal translocation step during translation elongation. During this step, the ribosome changes from the pre-translocational (PRE) to the post-translocational (POST) state as the newly formed A-site-bound peptidyl-tRNA and P-site-bound deacylated tRNA move to the P and E sites, respectively. Catalyzes the coordinated movement of the two tRNA molecules, the mRNA and conformational changes in the ribosome. This Metallosphaera sedula (strain ATCC 51363 / DSM 5348 / JCM 9185 / NBRC 15509 / TH2) protein is Elongation factor 2.